A 484-amino-acid polypeptide reads, in one-letter code: tRNA sulfurtransferase (484 aa).

The region spanning 61-166 (PHLIELLQCI…DKLLFIQARH (106 aa)) is the THUMP domain. Residues 183 to 184 (LI), lysine 265, glycine 287, and glutamine 296 contribute to the ATP site. Cysteine 344 and cysteine 456 are oxidised to a cystine. Residues 404–483 (LGENDVILDI…FNNVQVFVKA (80 aa)) form the Rhodanese domain. The Cysteine persulfide intermediate role is filled by cysteine 456.

Belongs to the ThiI family.

The protein localises to the cytoplasm. The catalysed reaction is [ThiI sulfur-carrier protein]-S-sulfanyl-L-cysteine + a uridine in tRNA + 2 reduced [2Fe-2S]-[ferredoxin] + ATP + H(+) = [ThiI sulfur-carrier protein]-L-cysteine + a 4-thiouridine in tRNA + 2 oxidized [2Fe-2S]-[ferredoxin] + AMP + diphosphate. It catalyses the reaction [ThiS sulfur-carrier protein]-C-terminal Gly-Gly-AMP + S-sulfanyl-L-cysteinyl-[cysteine desulfurase] + AH2 = [ThiS sulfur-carrier protein]-C-terminal-Gly-aminoethanethioate + L-cysteinyl-[cysteine desulfurase] + A + AMP + 2 H(+). It participates in cofactor biosynthesis; thiamine diphosphate biosynthesis. Functionally, catalyzes the ATP-dependent transfer of a sulfur to tRNA to produce 4-thiouridine in position 8 of tRNAs, which functions as a near-UV photosensor. Also catalyzes the transfer of sulfur to the sulfur carrier protein ThiS, forming ThiS-thiocarboxylate. This is a step in the synthesis of thiazole, in the thiamine biosynthesis pathway. The sulfur is donated as persulfide by IscS. The protein is tRNA sulfurtransferase of Actinobacillus succinogenes (strain ATCC 55618 / DSM 22257 / CCUG 43843 / 130Z).